A 568-amino-acid polypeptide reads, in one-letter code: MHAQDKGGILPALSLLLIAVAMVSPSQAAYKLQERYSWNQLDFAFPSARLKEQALASGDYIPTNALPVGVEHFGNRLFVTVPRWRDGIPATLTYINMDHSVTGSPELIPYPDWRANTAGDCANSITTAYRIKVDECGRLWVLDTGTVGIGNTTTNPCPYAINIFDLATDTRIRRYELPAADTNPNTFIANIAVDIGKSCDDAFAYFADELGYGLISYSWELNKSWRFSAHSYFFPDPLRGDFNVAGINFQWGEEGIFGMSLTPIRSDGYRTLYFSPLASHRQFAVSTRILRDETRTEDSYHDFVALDERGPNAHTTSRVMSDDGVELFNLIDQNAVGCWHSSMPYSPQSHGIVDRDDVGLVFPADIKIDENKNVWVLSDRMPVFLLSDLDYSDTNFRIYTAPLATLIENTVCDLRNNAYGPPNTVSIPKQAAPGHSAVGPPLYTTTNQYRPVLSQKPQTSWGPSLPSRNYLPALNGNPGIPGSRNNLNNLGAPGQVVSSVSVSTNTVGPSGIEVPKAYVFNQHNGLNYETSGPHLFPTLQPAPSQLGGGLKTYVNARQSGWWHHQQQG.

Residues 1–28 form the signal peptide; it reads MHAQDKGGILPALSLLLIAVAMVSPSQA. N-linked (GlcNAc...) asparagine glycosylation is found at Asn151 and Asn222.

This sequence belongs to the major royal jelly protein family.

The protein localises to the secreted. Its function is as follows. Controls the pigmentation pattern of the adult cuticle and larval mouth parts. The protein is Protein yellow (y) of Drosophila subobscura (Fruit fly).